A 295-amino-acid chain; its full sequence is Light-independent protochlorophyllide reductase iron-sulfur ATP-binding protein (295 aa).

Residues 39–44 (GIGKST) and Lys-68 contribute to the ATP site. Residue Ser-43 participates in Mg(2+) binding. [4Fe-4S] cluster is bound by residues Cys-124 and Cys-158. 209-210 (NR) contributes to the ATP binding site.

It belongs to the NifH/BchL/ChlL family. Homodimer. Protochlorophyllide reductase is composed of three subunits; ChlL, ChlN and ChlB. It depends on [4Fe-4S] cluster as a cofactor.

The enzyme catalyses chlorophyllide a + oxidized 2[4Fe-4S]-[ferredoxin] + 2 ADP + 2 phosphate = protochlorophyllide a + reduced 2[4Fe-4S]-[ferredoxin] + 2 ATP + 2 H2O. The protein operates within porphyrin-containing compound metabolism; chlorophyll biosynthesis (light-independent). In terms of biological role, component of the dark-operative protochlorophyllide reductase (DPOR) that uses Mg-ATP and reduced ferredoxin to reduce ring D of protochlorophyllide (Pchlide) to form chlorophyllide a (Chlide). This reaction is light-independent. The L component serves as a unique electron donor to the NB-component of the complex, and binds Mg-ATP. The polypeptide is Light-independent protochlorophyllide reductase iron-sulfur ATP-binding protein (Prochlorococcus marinus (strain MIT 9515)).